The chain runs to 240 residues: Transcription factor bHLH101 (240 aa).

The bHLH domain occupies 65-117; it reads EKKLNHNASERDRRRKLNALYSSLRALLPLSDQKRKLSIPMTVARVVKYIPEQ.

As to quaternary structure, homodimer. In terms of tissue distribution, flowers.

It localises to the nucleus. The polypeptide is Transcription factor bHLH101 (BHLH101) (Arabidopsis thaliana (Mouse-ear cress)).